Consider the following 155-residue polypeptide: NADH-ubiquinone oxidoreductase chain 6 (155 aa).

4 helical membrane passes run 24-44 (MSLL…LGSF), 51-71 (YILF…VCMI), 88-108 (AWGA…IILG), and 118-138 (IPMT…FAVV).

This sequence belongs to the complex I subunit 6 family.

Its subcellular location is the mitochondrion membrane. The catalysed reaction is a ubiquinone + NADH + 5 H(+)(in) = a ubiquinol + NAD(+) + 4 H(+)(out). Its function is as follows. Core subunit of the mitochondrial membrane respiratory chain NADH dehydrogenase (Complex I) that is believed to belong to the minimal assembly required for catalysis. Complex I functions in the transfer of electrons from NADH to the respiratory chain. The immediate electron acceptor for the enzyme is believed to be ubiquinone. The sequence is that of NADH-ubiquinone oxidoreductase chain 6 (ND6) from Albinaria caerulea (Land snail).